The following is a 117-amino-acid chain: Transcription elongation factor A protein-like 8 (117 aa).

2 stretches are compositionally biased toward basic and acidic residues: residues 1 to 10 (MQKSCEENEG) and 61 to 75 (FKED…PEEM). The disordered stretch occupies residues 1 to 75 (MQKSCEENEG…PVRHLDPEEM (75 aa)). Residues 73 to 100 (EEMIRGVDELERLREEIRRVRNKFVMMH) adopt a coiled-coil conformation.

The protein belongs to the TFS-II family. TFA subfamily.

The protein localises to the nucleus. May be involved in transcriptional regulation. This chain is Transcription elongation factor A protein-like 8 (TCEAL8), found in Homo sapiens (Human).